We begin with the raw amino-acid sequence, 303 residues long: Shikimate kinase 1, chloroplastic (303 aa).

The transit peptide at 1–66 (MEAAITQRIQ…QRRAVSPAVS (66 aa)) directs the protein to the chloroplast. Residue 109–116 (GMMGSGKT) participates in ATP binding. Thr-116 is a Mg(2+) binding site. Substrate is bound by residues Asp-134, Arg-159, and Gly-181. Arg-220 contacts ATP.

It belongs to the shikimate kinase family. In terms of assembly, homodimer. It depends on Mg(2+) as a cofactor.

The protein resides in the plastid. The protein localises to the chloroplast. The catalysed reaction is shikimate + ATP = 3-phosphoshikimate + ADP + H(+). The protein operates within metabolic intermediate biosynthesis; chorismate biosynthesis; chorismate from D-erythrose 4-phosphate and phosphoenolpyruvate: step 5/7. Catalyzes the specific phosphorylation of the 3-hydroxyl group of shikimic acid using ATP as a cosubstrate. The chain is Shikimate kinase 1, chloroplastic (SK1) from Arabidopsis thaliana (Mouse-ear cress).